We begin with the raw amino-acid sequence, 322 residues long: NADH-quinone oxidoreductase subunit H (322 aa).

8 helical membrane passes run 12 to 32, 79 to 99, 111 to 131, 151 to 171, 183 to 203, 234 to 254, 262 to 282, and 301 to 321; these read IGKA…MSFI, IFIL…AVVP, VGLL…LFAG, LSYE…TGSF, LWNV…GVAV, FFVG…TLFF, LPPF…FILL, and VCLP…LMNV.

Belongs to the complex I subunit 1 family. As to quaternary structure, NDH-1 is composed of 13 different subunits. Subunits NuoA, H, J, K, L, M, N constitute the membrane sector of the complex.

It localises to the cell inner membrane. It carries out the reaction a quinone + NADH + 5 H(+)(in) = a quinol + NAD(+) + 4 H(+)(out). In terms of biological role, NDH-1 shuttles electrons from NADH, via FMN and iron-sulfur (Fe-S) centers, to quinones in the respiratory chain. The immediate electron acceptor for the enzyme in this species is believed to be ubiquinone. Couples the redox reaction to proton translocation (for every two electrons transferred, four hydrogen ions are translocated across the cytoplasmic membrane), and thus conserves the redox energy in a proton gradient. This subunit may bind ubiquinone. In Shewanella oneidensis (strain ATCC 700550 / JCM 31522 / CIP 106686 / LMG 19005 / NCIMB 14063 / MR-1), this protein is NADH-quinone oxidoreductase subunit H.